A 178-amino-acid chain; its full sequence is uncharacterized protein (178 aa).

Belongs to the mimivirus L114/R131 family.

This is an uncharacterized protein from Acanthamoeba polyphaga mimivirus (APMV).